Consider the following 89-residue polypeptide: Envelope protein US9 (89 aa).

Basic and acidic residues predominate over residues methionine 1 to serine 10. Residues methionine 1–proline 21 are disordered. Over methionine 1 to leucine 66 the chain is Intravirion. The Internalization motif motif lies at tyrosine 20 to alanine 23. The tract at residues glutamate 29–glutamate 38 is acidic. Serine 33 and serine 35 each carry phosphoserine; by host CK2. The chain crosses the membrane as a helical; Signal-anchor for type II membrane protein span at residues valine 67–leucine 87. Residues leucine 88 to arginine 89 lie on the Virion surface side of the membrane.

It belongs to the alphaherpesvirinae envelope protein US9 family. Post-translationally, phosphorylated on serines within the acidic cluster, possibly by host CK2. Phosphorylation determines whether endocytosed viral US9 traffics to the trans-Golgi network or recycles to the cell membrane.

It is found in the virion membrane. It localises to the host Golgi apparatus membrane. The protein resides in the host smooth endoplasmic reticulum membrane. Its subcellular location is the host cell membrane. In terms of biological role, essential for the anterograde spread of the infection throughout the host nervous system. Together with the gE/gI heterodimer, US9 is involved in the sorting and transport of viral structural components toward axon tips. The protein is Envelope protein US9 of Homo sapiens (Human).